We begin with the raw amino-acid sequence, 137 residues long: Peptide methionine sulfoxide reductase MsrB (137 aa).

A MsrB domain is found at 7–129 (AEELKKKLSE…NSASLAFSDE (123 aa)). Positions 46, 49, 95, and 98 each coordinate Zn(2+). The active-site Nucleophile is Cys118.

This sequence belongs to the MsrB Met sulfoxide reductase family. It depends on Zn(2+) as a cofactor.

It carries out the reaction L-methionyl-[protein] + [thioredoxin]-disulfide + H2O = L-methionyl-(R)-S-oxide-[protein] + [thioredoxin]-dithiol. This Salmonella agona (strain SL483) protein is Peptide methionine sulfoxide reductase MsrB.